Consider the following 146-residue polypeptide: Histone H2A.1 (146 aa).

Position 1 is an N-acetylmethionine (M1). A disordered region spans residues 1–24; the sequence is MDATKTTKGAGGRKGGPRKKSVTK. An SPKK motif motif is present at residues 142–145; that stretch reads SPKK.

The protein belongs to the histone H2A family. The nucleosome is a histone octamer containing two molecules each of H2A, H2B, H3 and H4 assembled in one H3-H4 heterotetramer and two H2A-H2B heterodimers. The octamer wraps approximately 147 bp of DNA. High expression in meristematic tissues, in cells of the root pericycle and in shoot cortical cells undergoing endoduplication of their DNA.

The protein localises to the nucleus. The protein resides in the chromosome. Core component of nucleosome. Nucleosomes wrap and compact DNA into chromatin, limiting DNA accessibility to the cellular machineries which require DNA as a template. Histones thereby play a central role in transcription regulation, DNA repair, DNA replication and chromosomal stability. DNA accessibility is regulated via a complex set of post-translational modifications of histones, also called histone code, and nucleosome remodeling. This chain is Histone H2A.1, found in Solanum lycopersicum (Tomato).